Here is an 85-residue protein sequence, read N- to C-terminus: uncharacterized protein (85 aa).

It to A.fulgidus AF_0255 and AF_1363.

This is an uncharacterized protein from Archaeoglobus fulgidus (strain ATCC 49558 / DSM 4304 / JCM 9628 / NBRC 100126 / VC-16).